We begin with the raw amino-acid sequence, 324 residues long: Hydroxylase/desaturase CTB9 (324 aa).

Residues 1–11 are compositionally biased toward polar residues; the sequence is MTSTITTTETL. Disordered regions lie at residues 1-33 and 288-308; these read MTST…KELP and TARR…EPRA.

Belongs to the asaB hydroxylase/desaturase family.

The protein operates within mycotoxin biosynthesis. Its function is as follows. Hydroxylase/desaturase; part of the gene cluster that mediates the biosynthesis of cercosporin, a light-activated, non-host-selective toxin. The perylenequinone chromophore of cercosporin absorbs light energy to attain an electronically-activated triplet state and produces active oxygen species such as the hydroxyl radical, superoxide, hydrogen peroxide or singlet oxygen upon reaction with oxygen molecules. These reactive oxygen species cause damage to various cellular components including lipids, proteins and nucleic acids. The first step of cercosporin biosynthesis is performed by the polyketide synthase CTB1 which catalyzes the formation of nor-toralactone. The starter unit acyltransferase (SAT) domain of CTB1 initiates polyketide extension by the selective utilization of acetyl-CoA, which is elongated to the heptaketide in the beta-ketoacyl synthase (KS) domain by successive condensations with six malonyl units introduced by the malonyl acyltransferase (MAT) domain. The product template (PT) domain catalyzes C4-C9 and C2-C11 aldol cyclizations and dehydrations to a trihydroxynaphthalene, which is thought to be delivered to the thioesterase (TE) domain for product release. The bifunctional enzyme CTB3 then methylates nor-toralactone to toralactone before conducting an unusual oxidative aromatic ring opening. The O-methyltransferase CTB2 further methylates the nascent OH-6 of the CBT3 product, blocking further oxidation at this site before the reductase CTB6 reduces the 2-oxopropyl ketone at position C7, giving naphthalene. The FAD-dependent monooxygenase CTB5 in concert with the multicopper oxidase CTB12 are responsible for homodimerization of naphthalene with CTB7 installing the dioxepine moiety, finally producing cercosporin. The fasciclin domain-containing protein CTB11 might act with CTB5 and CTB12 whereas the roles of CTB9 and CTB10 have still to be elucidated. The sequence is that of Hydroxylase/desaturase CTB9 from Cercospora beticola (Sugarbeet leaf spot fungus).